The following is a 530-amino-acid chain: Ubiquitin carboxyl-terminal hydrolase 17-like protein 18 (530 aa).

One can recognise a USP domain in the interval 80 to 375; that stretch reads AGLQNMGNTC…QAYVLFYIQK (296 aa). Cys89 acts as the Nucleophile in catalysis. His334 serves as the catalytic Proton acceptor. Composition is skewed to basic and acidic residues over residues 382–392 and 398–413; these read SESVSRGREPR and DTDR…RDHP. 2 disordered regions span residues 382 to 414 and 509 to 530; these read SESV…DHPC and RGRA…LVCQ. The segment covering 510 to 524 has biased composition (basic residues); that stretch reads GRARRSKGKNKHSKR.

It belongs to the peptidase C19 family. USP17 subfamily.

It is found in the nucleus. Its subcellular location is the endoplasmic reticulum. The enzyme catalyses Thiol-dependent hydrolysis of ester, thioester, amide, peptide and isopeptide bonds formed by the C-terminal Gly of ubiquitin (a 76-residue protein attached to proteins as an intracellular targeting signal).. Functionally, deubiquitinating enzyme that removes conjugated ubiquitin from specific proteins to regulate different cellular processes that may include cell proliferation, progression through the cell cycle, apoptosis, cell migration, and the cellular response to viral infection. The polypeptide is Ubiquitin carboxyl-terminal hydrolase 17-like protein 18 (USP17L18) (Homo sapiens (Human)).